Consider the following 364-residue polypeptide: Leucine-rich repeat-containing protein 19 (364 aa).

A signal peptide spans 1 to 20 (MKVTRFMFWLFSMLLPSVKS). The Extracellular segment spans residues 21–264 (QASETEVPCN…SEHEPLGKSW (244 aa)). N-linked (GlcNAc...) asparagine glycans are attached at residues asparagine 30, asparagine 35, asparagine 46, and asparagine 88. LRR repeat units lie at residues 44–69 (STNVTILDLSYNRITLNAADSRVLQM), 70–93 (YSLLTELYLMENNIIALYNSSFRN), 94–117 (LLNLEILNICGNSISVIQQGSFVG), 118–141 (LNELKQLFLCQNKILQLNPDTFVP), 143–163 (NNLKVLNLQGNLIRLFDAPQL), and 164–190 (PHLEILTLDGNPWNCTCGLLELHNWLN). One can recognise an LRRCT domain in the interval 174–225 (NPWNCTCGLLELHNWLNTSNVTLENENMTMCSYPDELKHDSIKSAPFTTECH). Residues asparagine 177, asparagine 190, asparagine 193, asparagine 200, asparagine 241, asparagine 245, and asparagine 250 are each glycosylated (N-linked (GlcNAc...) asparagine). Residues 265–285 (AFLVGVVATVLLTSLLIFIAI) traverse the membrane as a helical segment. The Cytoplasmic segment spans residues 286 to 364 (KCPVWYNILL…IDINEVHEEK (79 aa)).

Interacts with TRAF2 and TRAF6. Strongly expressed in kidney, also expressed in spleen, intestine and colon. Highly expressed in epithelial cells. In kidney, mainly expressed in renal collecting duct epithelial cells.

The protein resides in the membrane. With respect to regulation, activated by TLR ligands such as LPS, bacterial DNA and peptidoglycan. Functionally, pathogen-recognition receptor which mediates the activation of TRAF2- and TRAF6 NF-kappa-B signaling pathways and induces the expression of pro-inflammatory cytokines. In kidney, prevents infection by uropathogenic bacteria by inducing the production of cytokines, chemokines and antimicrobial substances. In gut, involved in host-microbiota interactions, plays a critical role in promoting the recruitment of immune cells and intestinal inflammation. This is Leucine-rich repeat-containing protein 19 from Mus musculus (Mouse).